Consider the following 158-residue polypeptide: NAD(P)H-quinone oxidoreductase subunit J, chloroplastic (158 aa).

It belongs to the complex I 30 kDa subunit family. In terms of assembly, NDH is composed of at least 16 different subunits, 5 of which are encoded in the nucleus.

Its subcellular location is the plastid. It is found in the chloroplast thylakoid membrane. The catalysed reaction is a plastoquinone + NADH + (n+1) H(+)(in) = a plastoquinol + NAD(+) + n H(+)(out). It carries out the reaction a plastoquinone + NADPH + (n+1) H(+)(in) = a plastoquinol + NADP(+) + n H(+)(out). In terms of biological role, NDH shuttles electrons from NAD(P)H:plastoquinone, via FMN and iron-sulfur (Fe-S) centers, to quinones in the photosynthetic chain and possibly in a chloroplast respiratory chain. The immediate electron acceptor for the enzyme in this species is believed to be plastoquinone. Couples the redox reaction to proton translocation, and thus conserves the redox energy in a proton gradient. This Nandina domestica (Heavenly bamboo) protein is NAD(P)H-quinone oxidoreductase subunit J, chloroplastic.